The following is a 131-amino-acid chain: Fatty acid-binding protein (131 aa).

(5Z,8Z,11Z,14Z)-eicosatetraenoate is bound by residues arginine 106 and 126 to 128 (RFY). (9Z)-octadecenoate contacts are provided by residues arginine 106 and 126-128 (RFY).

Belongs to the calycin superfamily. Fatty-acid binding protein (FABP) family.

The protein localises to the cytoplasm. In terms of biological role, FABPs are thought to play a role in the intracellular transport of long-chain fatty acids and their acyl-CoA esters. In Tyrophagus putrescentiae (Mold mite), this protein is Fatty acid-binding protein.